A 323-amino-acid polypeptide reads, in one-letter code: GDP-L-fucose synthase 1 (323 aa).

A2 carries the post-translational modification N-acetylalanine. An NADP(+)-binding site is contributed by 23–29; sequence GHRGLVG. Residue Y149 is the Proton donor/acceptor of the active site. NADP(+) contacts are provided by residues K153, 176–179, and H192; that span reads PTNL. R200, W215, R222, and D282 together coordinate substrate.

It belongs to the NAD(P)-dependent epimerase/dehydratase family. Fucose synthase subfamily. In terms of assembly, binds and stabilizes MUR1. Homodimer. As to expression, highly expressed in roots and flowers, less abundant in leaves, stems and siliques.

The enzyme catalyses GDP-beta-L-fucose + NADP(+) = GDP-4-dehydro-alpha-D-rhamnose + NADPH + H(+). The protein operates within nucleotide-sugar biosynthesis; GDP-L-fucose biosynthesis via de novo pathway; GDP-L-fucose from GDP-alpha-D-mannose: step 2/2. In terms of biological role, catalyzes the two-step NADP-dependent conversion of GDP-4-dehydro-6-deoxy-D-mannose to GDP-fucose, involving an epimerase and a reductase reaction. Not involved in the synthesis of GDP-L-galactose from GDP-D-mannose. The sequence is that of GDP-L-fucose synthase 1 (GER1) from Arabidopsis thaliana (Mouse-ear cress).